A 270-amino-acid polypeptide reads, in one-letter code: Urease accessory protein UreD (270 aa).

It belongs to the UreD family. As to quaternary structure, ureD, UreF and UreG form a complex that acts as a GTP-hydrolysis-dependent molecular chaperone, activating the urease apoprotein by helping to assemble the nickel containing metallocenter of UreC. The UreE protein probably delivers the nickel.

It is found in the cytoplasm. Its function is as follows. Required for maturation of urease via the functional incorporation of the urease nickel metallocenter. The sequence is that of Urease accessory protein UreD from Microcystis aeruginosa (strain NIES-843 / IAM M-2473).